Consider the following 133-residue polypeptide: Late embryogenesis abundant protein B19.3 (133 aa).

Residues methionine 1–serine 133 are disordered. 3 stretches are compositionally biased toward basic and acidic residues: residues glutamate 7–glutamate 19, glutamate 32–arginine 102, and glycine 113–serine 133. Tandem repeats lie at residues glycine 24–arginine 43, glycine 44–lysine 63, and glycine 64–lysine 83. Positions glycine 24–lysine 83 are 3 X 20 AA tandem repeats.

The protein belongs to the small hydrophilic plant seed protein family.

Functionally, lea proteins are late embryonic proteins abundant in higher plant seed embryos. The polypeptide is Late embryogenesis abundant protein B19.3 (B19.3) (Hordeum vulgare (Barley)).